The following is a 199-amino-acid chain: Prolactin-2 (199 aa).

3 disulfides stabilise this stretch: C4–C11, C58–C174, and C191–C199.

This sequence belongs to the somatotropin/prolactin family.

It is found in the secreted. The sequence is that of Prolactin-2 from Crocodylus novaeguineae (Crocodile).